An 800-amino-acid polypeptide reads, in one-letter code: Nucleolar RNA helicase 2-B (800 aa).

Over residues 1–14 (MPGKVYTDEMEGKS) the composition is skewed to basic and acidic residues. The segment at 1 to 200 (MPGKVYTDEM…TDTSEITAAN (200 aa)) is disordered. A compositionally biased stretch (polar residues) spans 114–124 (ETNISLSSQGG). Residues 221–249 (GDFSKFPISKDTIKNLQAKGVTYLFPIQS) carry the Q motif motif. The Helicase ATP-binding domain occupies 252 to 431 (FHTVYSGKDV…KKYMRKQYEK (180 aa)). 265 to 272 (ARTGTGKT) contributes to the ATP binding site. The DEAD box motif lies at 374–377 (DEVD). The 157-residue stretch at 464–620 (DIVQVYSGSH…SSADAIKSLD (157 aa)) folds into the Helicase C-terminal domain. The disordered stretch occupies residues 750–800 (IQESERSFDGPRNRSFGGRGRRPFDRRNNSRNSSGGGGGRRGRSGGFRRGR). The segment covering 752–761 (ESERSFDGPR) has biased composition (basic and acidic residues). The span at 789 to 800 (RRGRSGGFRRGR) shows a compositional bias: basic residues.

It belongs to the DEAD box helicase family. DDX21/DDX50 subfamily. Widely expressed. Expressed at higher level in stomach. Expressed at lower level compared to ddx21-a.

It is found in the nucleus. Its subcellular location is the nucleolus. It localises to the nucleoplasm. The protein resides in the cytoplasm. The protein localises to the cytosol. It is found in the mitochondrion. It carries out the reaction ATP + H2O = ADP + phosphate + H(+). Its function is as follows. RNA helicase that acts as a sensor of the transcriptional status of both RNA polymerase (Pol) I and II: promotes ribosomal RNA (rRNA) processing and transcription from polymerase II (Pol II). Binds various RNAs, such as rRNAs, snoRNAs, 7SK and, at lower extent, mRNAs. In the nucleolus, localizes to rDNA locus, where it directly binds rRNAs and snoRNAs, and promotes rRNA transcription, processing and modification. Required for rRNA 2'-O-methylation, possibly by promoting the recruitment of late-acting snoRNAs SNORD56 and SNORD58 with pre-ribosomal complexes. In the nucleoplasm, binds 7SK RNA and is recruited to the promoters of Pol II-transcribed genes: acts by facilitating the release of P-TEFb from inhibitory 7SK snRNP in a manner that is dependent on its helicase activity, thereby promoting transcription of its target genes. Required to prevent R-loop-associated DNA damage and transcription-associated genomic instability. The protein is Nucleolar RNA helicase 2-B (ddx21-b) of Xenopus laevis (African clawed frog).